Here is a 369-residue protein sequence, read N- to C-terminus: 2-aminoethylphosphonate--pyruvate transaminase (369 aa).

Position 193 is an N6-(pyridoxal phosphate)lysine (lysine 193).

This sequence belongs to the class-V pyridoxal-phosphate-dependent aminotransferase family. PhnW subfamily. As to quaternary structure, homodimer. Requires pyridoxal 5'-phosphate as cofactor.

The catalysed reaction is (2-aminoethyl)phosphonate + pyruvate = phosphonoacetaldehyde + L-alanine. Involved in phosphonate degradation. The protein is 2-aminoethylphosphonate--pyruvate transaminase of Pseudomonas fluorescens (strain Pf0-1).